Here is a 770-residue protein sequence, read N- to C-terminus: Signal transducer and activator of transcription 3 (770 aa).

At Ala-2 the chain carries N-acetylalanine. Lys-49 and Lys-87 each carry N6-acetyllysine. An Essential for nuclear import motif is present at residues 150–162; it reads DVRKRVQDLEQKM. Residues 580 to 670 enclose the SH2 domain; it reads WNEGYIMGFI…DATNILVSPL (91 aa). An allysine; alternate mark is found at Lys-601, Lys-615, and Lys-631. N6-acetyllysine; alternate occurs at positions 601, 615, and 631. Residue Tyr-640 is modified to Phosphotyrosine; by TYK2. Lys-685 carries the post-translational modification Allysine; alternate. N6-acetyllysine; alternate is present on Lys-685. Tyr-705 carries the post-translational modification Phosphotyrosine; by FER and PTK6. Lys-707 bears the N6-acetyllysine mark. Thr-714 is modified (phosphothreonine). Ser-727 bears the Phosphoserine; by DYRK2, NLK, NEK6, IRAK1, RPS6KA5, ZIPK/DAPK3 and PKC/PRKCE mark.

Belongs to the transcription factor STAT family. In terms of assembly, forms a homodimer or a heterodimer with a related family member (at least STAT1). Component of a promoter-binding complex composed of STAT3, NFATC3 and NFATC4; complex formation is enhanced by calcineurin. Interacts with IL31RA, NCOA1, PELP1, SIPAR, SOCS7, STATIP1 and TMF1. Interacts with IL23R in presence of IL23. Interacts (via SH2 domain) with NLK. Interacts with ARL2BP; the interaction is enhanced by LIF and JAK1 expression. Interacts with KPNA4 and KPNA5; KPNA4 may be the primary mediator of nuclear import. Interacts with CAV2; the interaction is increased on insulin-induced tyrosine phosphorylation of CAV2 and leads to STAT3 activation. Interacts with ARL2BP; interaction is enhanced with ARL2. Interacts with NEK6. Binds to CDK9 when activated and nuclear. Interacts with BMX. Interacts with ZIPK/DAPK3. Interacts with PIAS3; the interaction occurs on stimulation by IL6, CNTF or OSM and inhibits the DNA binding activity of STAT3. In prostate cancer cells, interacts with PRKCE and promotes DNA binding activity of STAT3. Interacts with STMN3, antagonizing its microtubule-destabilizing activity. Interacts with the 'Lys-129' acetylated form of BIRC5/survivin. Interacts with FER. Interacts (via SH2 domain) with EIF2AK2/PKR (via the kinase catalytic domain). Interacts with FGFR4. Interacts with INPP5F; the interaction is independent of STAT3 Tyr-705 phosphorylation status. Interacts with OCIAD1 and OCIAD2. Interacts (unphosphorylated or phosphorylated at Ser-727) with PHB1. Interacts and may form heterodimers with NHLH1. Found in a complex with SLC39A6, SLC39A10 and with the 'Ser-727' phosphorylated form of STAT3 throughout mitosis. Interacts (when acetylated) with EP300 (via bromo domain); interaction takes place following STAT3 acetylation by EP300 and promotes enhanceosome assembly. Interacts (when acetylated) with BRD2 (via bromo domain); interaction promotes STAT3 recruitment to chromatin and T-helper Th17 cell differentiation. Interacts with FAM220A/SIPAR; the interaction occurs in both the nucleus and the cytoplasm, is enhanced by IL6 and promotes STAT3 dephosphorylation. Interacts in both unphosphorylated and phosphorylated forms with FAM220A but interacts preferentially in the phosphorylated form in the nucleus. Interacts with PTPN2; the interaction is promoted by FAM220A and leads to STAT3 dephosphorylation which negatively regulates STAT3 transcriptional activator activity. In terms of processing, activated through tyrosine phosphorylation by BMX. Tyrosine phosphorylated in response to IL-6, IL-11, CNTF, LIF, CSF-1, EGF, PDGF, IFN-alpha and OSM. Tyrosine phosphorylated in response to constitutively activated FGFR1, FGFR2, FGFR3 and FGFR4. Phosphorylated on serine upon DNA damage, probably by ATM or ATR. Serine phosphorylation is important for the formation of stable DNA-binding STAT3 homodimers and maximal transcriptional activity. ARL2BP may participate in keeping the phosphorylated state of STAT3 within the nucleus. Tyrosine phosphorylated upon stimulation with EGF. Upon LPS challenge, phosphorylated within the nucleus by IRAK1. Phosphorylated on Ser-727 by RPS6KA5. Dephosphorylation on tyrosine residues by PTPN2 negatively regulates IL6/interleukin-6 signaling. Phosphorylation at Tyr-705 by FER, isoform M2 of PKM (PKM2) or PTK6 leads to an increase of its transcriptional activity. Phosphorylation at Tyr-705 is increased in the presence of calcineurin. Phosphorylation at Tyr-640 by TYK2 negatively regulates transcriptional activity. Post-translationally, acetylated on lysine residues by EP300/p300, promoting its activation. Acetylation at Lys-49 and Lys-87 by EP300/p300 promotes its activation. Acetylation at Lys-87 by EP300/p300 promotes its association with BRD2 and recruitment to chromatin. Deacetylated at Lys-49 and Lys-87 by HDAC1. Acetylation at Lys-685 by EP300/p300 promotes its homodimerization and activation. Deacetylated at Lys-685 by HDAC3. Acetylated on lysine residues by CREBBP. Deacetylation by LOXL3 leads to disrupt STAT3 dimerization and inhibit STAT3 transcription activity. Oxidation of lysine residues to allysine on STAT3 preferentially takes place on lysine residues that are acetylated. Some lysine residues are oxidized to allysine by LOXL3, leading to disrupt STAT3 dimerization and inhibit STAT3 transcription activity. Oxidation of lysine residues to allysine on STAT3 preferentially takes place on lysine residues that are acetylated.

Its subcellular location is the cytoplasm. The protein resides in the nucleus. Signal transducer and transcription activator that mediates cellular responses to interleukins, KITLG/SCF, LEP and other growth factors. Once activated, recruits coactivators, such as NCOA1 or MED1, to the promoter region of the target gene. May mediate cellular responses to activated FGFR1, FGFR2, FGFR3 and FGFR4. Upon activation of IL6ST/gp130 signaling by interleukin-6 (IL6), binds to the IL6-responsive elements identified in the promoters of various acute-phase protein genes. Activated by IL31 through IL31RA. Acts as a regulator of inflammatory response by regulating differentiation of naive CD4(+) T-cells into T-helper Th17 or regulatory T-cells (Treg): acetylation promotes its transcription activity and cell differentiation while deacetylation and oxidation of lysine residues by LOXL3 inhibits differentiation. Involved in cell cycle regulation by inducing the expression of key genes for the progression from G1 to S phase, such as CCND1. Mediates the effects of LEP on melanocortin production, body energy homeostasis and lactation. May play an apoptotic role by transctivating BIRC5 expression under LEP activation. Cytoplasmic STAT3 represses macroautophagy by inhibiting EIF2AK2/PKR activity. Plays a crucial role in basal beta cell functions, such as regulation of insulin secretion. Following JAK/STAT signaling activation and as part of a complex with NFATC3 and NFATC4, binds to the alpha-beta E4 promoter region of CRYAB and activates transcription in cardiomyocytes. Plays an important role in host defense in methicillin-resistant S.aureus lung infection by regulating the expression of the antimicrobial lectin REG3G. The sequence is that of Signal transducer and activator of transcription 3 (STAT3) from Bos taurus (Bovine).